A 421-amino-acid polypeptide reads, in one-letter code: Gamma-glutamyl phosphate reductase (421 aa).

It belongs to the gamma-glutamyl phosphate reductase family.

The protein resides in the cytoplasm. It catalyses the reaction L-glutamate 5-semialdehyde + phosphate + NADP(+) = L-glutamyl 5-phosphate + NADPH + H(+). The protein operates within amino-acid biosynthesis; L-proline biosynthesis; L-glutamate 5-semialdehyde from L-glutamate: step 2/2. Its function is as follows. Catalyzes the NADPH-dependent reduction of L-glutamate 5-phosphate into L-glutamate 5-semialdehyde and phosphate. The product spontaneously undergoes cyclization to form 1-pyrroline-5-carboxylate. In Pseudomonas aeruginosa (strain ATCC 15692 / DSM 22644 / CIP 104116 / JCM 14847 / LMG 12228 / 1C / PRS 101 / PAO1), this protein is Gamma-glutamyl phosphate reductase.